The chain runs to 227 residues: Acyl-protein thioesterase 1 (227 aa).

Active-site charge relay system residues include Ser119, Asp173, and His207.

It belongs to the AB hydrolase superfamily. AB hydrolase 2 family.

The protein localises to the cytoplasm. It localises to the nucleus. It catalyses the reaction S-hexadecanoyl-L-cysteinyl-[protein] + H2O = L-cysteinyl-[protein] + hexadecanoate + H(+). In terms of biological role, hydrolyzes fatty acids from S-acylated cysteine residues in proteins with a strong preference for palmitoylated G-alpha proteins over other acyl substrates. Mediates the deacylation of G-alpha proteins such as GPA1 in vivo, but has weak or no activity toward palmitoylated Ras proteins. Has weak lysophospholipase activity in vitro; however such activity may not exist in vivo. This chain is Acyl-protein thioesterase 1, found in Saccharomyces cerevisiae (strain ATCC 204508 / S288c) (Baker's yeast).